A 150-amino-acid chain; its full sequence is Large ribosomal subunit protein eL19 (150 aa).

The disordered stretch occupies residues 59 to 89 (SRYRARIRHEQKKKGRHRGPGSRKGKKTARM). A compositionally biased stretch (basic residues) spans 61-89 (YRARIRHEQKKKGRHRGPGSRKGKKTARM).

It belongs to the eukaryotic ribosomal protein eL19 family. In terms of assembly, part of the 50S ribosomal subunit.

Its function is as follows. Binds to the 23S rRNA. This chain is Large ribosomal subunit protein eL19, found in Pyrococcus horikoshii (strain ATCC 700860 / DSM 12428 / JCM 9974 / NBRC 100139 / OT-3).